The sequence spans 769 residues: Major inner protein P1 (769 aa).

As to quaternary structure, homodimer. Associates with the polymerase complex.

It localises to the virion. In terms of biological role, P1 is the major inner capsid (core) protein of the polyhedral procapsid, which is responsible for genomic replication and transcription. Forms a dodecahedral shell from 60 asymmetric dimers. Binds to RNA and may be involved in genomic packaging. This chain is Major inner protein P1 (P1), found in Pseudomonas phage phi6 (Bacteriophage phi-6).